A 419-amino-acid chain; its full sequence is UDP-N-acetylglucosamine 1-carboxyvinyltransferase 2 (419 aa).

24–25 provides a ligand contact to phosphoenolpyruvate; the sequence is KN. UDP-N-acetyl-alpha-D-glucosamine is bound at residue Arg-94. Cys-118 acts as the Proton donor in catalysis. Cys-118 carries the post-translational modification 2-(S-cysteinyl)pyruvic acid O-phosphothioketal. Residues 123-127, Asp-307, and Ile-329 each bind UDP-N-acetyl-alpha-D-glucosamine; that span reads RPIDQ.

The protein belongs to the EPSP synthase family. MurA subfamily.

The protein resides in the cytoplasm. The catalysed reaction is phosphoenolpyruvate + UDP-N-acetyl-alpha-D-glucosamine = UDP-N-acetyl-3-O-(1-carboxyvinyl)-alpha-D-glucosamine + phosphate. It functions in the pathway cell wall biogenesis; peptidoglycan biosynthesis. Its function is as follows. Cell wall formation. Adds enolpyruvyl to UDP-N-acetylglucosamine. This Staphylococcus aureus (strain MSSA476) protein is UDP-N-acetylglucosamine 1-carboxyvinyltransferase 2.